A 497-amino-acid polypeptide reads, in one-letter code: Low affinity K(+) transporter 1 (497 aa).

Over 1–29 (MFNHDWKYSINSKTFADLNIELFRNHKFK) the chain is Extracellular. A helical membrane pass occupies residues 30–50 (TVLNYIIGVVGWNGLKLALFV). At 51–80 (SDIYTCIKLLAFNSWSNNIIKPYLPFKISK) the chain is on the cytoplasmic side. The chain crosses the membrane as a helical span at residues 81 to 101 (WLFSGCILASIVLLIWEAIAG). Topologically, residues 102–216 (MRIYKTGNIS…TNHEEAVILS (115 aa)) are extracellular. A helical transmembrane segment spans residues 217-237 (LMLFSFIIWALFVFKFLLAVI). Over 238–497 (CSIFVYYKII…EDEDRTYNYT (260 aa)) the chain is Cytoplasmic. Residues serine 291 and serine 319 each carry the phosphoserine modification. The segment at 420 to 469 (EFHGPLDSMPNTTNNIRNFNSNSSRPRPPPLQTKSSINSKADSNDNGRIY) is disordered. The span at 429–444 (PNTTNNIRNFNSNSSR) shows a compositional bias: low complexity. Polar residues predominate over residues 451–465 (QTKSSINSKADSNDN).

It belongs to the KCH1 low affinity K(+) transporter family.

The protein localises to the vacuole membrane. Its subcellular location is the cell membrane. The catalysed reaction is K(+)(in) = K(+)(out). Low affinity potassium transporter that, with PRM6/KCH2, participates in high-affinity Ca(2+) influx system (HACS) activation during the response to mating pheromone. Directly promotes K(+) influx and HACS may electrochemically respond to this K(+) influx. KCH1 and KCH2 act at the apex of the calcium signaling pathway that is used for survival during prolonged exposures to mating pheromones. This Saccharomyces cerevisiae (strain ATCC 204508 / S288c) (Baker's yeast) protein is Low affinity K(+) transporter 1.